Here is a 75-residue protein sequence, read N- to C-terminus: Large ribosomal subunit protein bL31 (75 aa).

Zn(2+) contacts are provided by Cys-16, Cys-18, Cys-37, and Cys-40.

Belongs to the bacterial ribosomal protein bL31 family. Type A subfamily. Part of the 50S ribosomal subunit. Zn(2+) is required as a cofactor.

Its function is as follows. Binds the 23S rRNA. The polypeptide is Large ribosomal subunit protein bL31 (Pseudomonas syringae pv. tomato (strain ATCC BAA-871 / DC3000)).